Consider the following 571-residue polypeptide: Septation ring formation regulator EzrA (571 aa).

Residues 1 to 3 are Extracellular-facing; sequence MYY. Residues 4 to 22 form a helical membrane-spanning segment; sequence MLIGFIIVVIAVIGAGYIL. Topologically, residues 23-571 are cytoplasmic; the sequence is KRKHYQRINE…ESKVSVDDIE (549 aa). Coiled-coil stretches lie at residues 248–298, 326–374, 400–437, and 478–529; these read LAQM…DTLE, DALA…ASGE, KFAEELRSLRKDELEARDDAERMRRAIITLDRKMERER, and RIAE…ENHF.

It belongs to the EzrA family.

Its subcellular location is the cell membrane. In terms of biological role, negative regulator of FtsZ ring formation; modulates the frequency and position of FtsZ ring formation. Inhibits FtsZ ring formation at polar sites. Interacts either with FtsZ or with one of its binding partners to promote depolymerization. The sequence is that of Septation ring formation regulator EzrA from Listeria monocytogenes serovar 1/2a (strain ATCC BAA-679 / EGD-e).